Here is a 1024-residue protein sequence, read N- to C-terminus: Beta-galactosidase (1024 aa).

Residues Asn-103 and Asp-202 each coordinate substrate. Na(+) is bound at residue Asp-202. Mg(2+) contacts are provided by Glu-417, His-419, and Glu-462. Substrate is bound by residues Glu-462 and 538–541 (EYAH). Glu-462 acts as the Proton donor in catalysis. Residue Glu-538 is the Nucleophile of the active site. Asn-598 contributes to the Mg(2+) binding site. Residues Phe-602 and Asn-605 each contribute to the Na(+) site. Residues Asn-605 and Trp-1000 each coordinate substrate.

Belongs to the glycosyl hydrolase 2 family. Homotetramer. The cofactor is Mg(2+). It depends on Na(+) as a cofactor.

The catalysed reaction is Hydrolysis of terminal non-reducing beta-D-galactose residues in beta-D-galactosides.. The chain is Beta-galactosidase from Escherichia coli O9:H4 (strain HS).